Consider the following 93-residue polypeptide: Small ribosomal subunit protein uS19c (93 aa).

It belongs to the universal ribosomal protein uS19 family.

It localises to the plastid. The protein localises to the chloroplast. Functionally, protein S19 forms a complex with S13 that binds strongly to the 16S ribosomal RNA. This Stigeoclonium helveticum (Green alga) protein is Small ribosomal subunit protein uS19c.